We begin with the raw amino-acid sequence, 425 residues long: MNAMLETPELPAVFDGVKLAAVAAVLYVIVRCLNLKSPTAPPDLYFQDSGLSRFLLKSCPLLTKEYIPPLIWGKSGHIQTALYGKMGRVRSPHPYGHRKFITMSDGATSTFDLFEPLAEHCVGDDITMVICPGIANHSEKQYIRTFVDYAQKNGYRCAVLNHLGALPNIELTSPRMFTYGCTWEFGAMVNYIKKTYPLTQLVVVGFSLGGNIVCKYLGETQANQEKVLCCVSVCQGYSALRAQETFMQWDQCRRFYNFLMADNMKKIILSHRQALFGDHVKKPQSLEDTDLSRLYTATSLMQIDDNVMRKFHGYNSLKEYYEEESCMRYLHRIYVPLMLVNAADDPLVHESLLTIPKSLSEKRENVMFVLPLHGGHLGFFEGSVLFPEPLTWMDKLVVEYANAICQWERNKSQCSDTEQVEADLE.

Residues 1 to 9 lie on the Cytoplasmic side of the membrane; sequence MNAMLETPE. A helical; Signal-anchor for type II membrane protein transmembrane segment spans residues 10-30; sequence LPAVFDGVKLAAVAAVLYVIV. The Extracellular portion of the chain corresponds to 31 to 425; that stretch reads RCLNLKSPTA…DTEQVEADLE (395 aa). In terms of domain architecture, AB hydrolase-1 spans 128-382; the sequence is MVICPGIANH…HGGHLGFFEG (255 aa). N-linked (GlcNAc...) asparagine glycosylation is present at asparagine 136. Catalysis depends on serine 207, which acts as the Nucleophile. Residues aspartate 345 and histidine 376 each act as charge relay system in the active site. A glycan (N-linked (GlcNAc...) asparagine) is linked at asparagine 410.

The protein belongs to the AB hydrolase superfamily. AB hydrolase 4 family.

The protein localises to the cell membrane. It catalyses the reaction Hydrolyzes glycerol monoesters of long-chain fatty acids.. The catalysed reaction is an acetyl ester + H2O = an aliphatic alcohol + acetate + H(+). It carries out the reaction a triacylglycerol + H2O = a diacylglycerol + a fatty acid + H(+). The enzyme catalyses 2-(5Z,8Z,11Z,14Z-eicosatetraenoyl)-glycerol + H2O = glycerol + (5Z,8Z,11Z,14Z)-eicosatetraenoate + H(+). It catalyses the reaction a butanoate ester + H2O = an aliphatic alcohol + butanoate + H(+). The catalysed reaction is hexadecanoate ester + H2O = an aliphatic alcohol + hexadecanoate + H(+). Its activity is regulated as follows. Acylglycerol lipase activity is activated upon binding to progesterone. Progesterone-dependent acylglycerol lipase that catalyzes hydrolysis of endocannabinoid arachidonoylglycerol (AG) from cell membrane. Acts as a progesterone receptor: progesterone-binding activates the acylglycerol lipase activity, mediating degradation of 1-arachidonoylglycerol (1AG) and 2-arachidonoylglycerol (2AG) to glycerol and arachidonic acid (AA). Also displays an ester hydrolase activity against acetyl ester, butanoate ester and hexadecanoate ester. Plays a key role in sperm capacitation in response to progesterone by mediating degradation of 2AG, an inhibitor of the sperm calcium channel CatSper, leading to calcium influx via CatSper and sperm activation. May also play a role in smooth muscle cells migration. This chain is Monoacylglycerol lipase ABHD2 (ABHD2), found in Macaca fascicularis (Crab-eating macaque).